The sequence spans 81 residues: Photosystem I iron-sulfur center (81 aa).

4Fe-4S ferredoxin-type domains are found at residues 2 to 31 (AHSVKIYDTCIGCTQCVRACPTDVLEMVPW) and 39 to 68 (IASAPRTEDCVGCKRCESACPTDFLSVRVY). [4Fe-4S] cluster-binding residues include Cys11, Cys14, Cys17, Cys21, Cys48, Cys51, Cys54, and Cys58.

The eukaryotic PSI reaction center is composed of at least 11 subunits. Requires [4Fe-4S] cluster as cofactor.

It localises to the plastid. It is found in the chloroplast thylakoid membrane. It carries out the reaction reduced [plastocyanin] + hnu + oxidized [2Fe-2S]-[ferredoxin] = oxidized [plastocyanin] + reduced [2Fe-2S]-[ferredoxin]. Its function is as follows. Apoprotein for the two 4Fe-4S centers FA and FB of photosystem I (PSI); essential for photochemical activity. FB is the terminal electron acceptor of PSI, donating electrons to ferredoxin. The C-terminus interacts with PsaA/B/D and helps assemble the protein into the PSI complex. Required for binding of PsaD and PsaE to PSI. PSI is a plastocyanin-ferredoxin oxidoreductase, converting photonic excitation into a charge separation, which transfers an electron from the donor P700 chlorophyll pair to the spectroscopically characterized acceptors A0, A1, FX, FA and FB in turn. This Physcomitrium patens (Spreading-leaved earth moss) protein is Photosystem I iron-sulfur center.